Reading from the N-terminus, the 1076-residue chain is MIESILSGAVRFRWLVLFLTAVVGAIGAWQLNLLPIDVTPDITNKQVQINTVVPTLSPVEVEKRVTYPIETAIAGLNGVENMRSLSRNGFSQVTVIFKESSNLYFMRQQVTERLAQARPNLPAGVEPQMGPVSTGLGEVFHYSVEYEFPDGKGAKVKDGEPGWQSDGSFLTERGERLTDRVSKLAYLRTVQDWIIRPQLRTTAGVADVDSLGGYVKQFVVEPDAAKMAAYGISFEELAQALEDANLSVGANFIRRSGESYLVRADARIKSADEIARAVIAQRQGVPITVGQVANINVGGELRSGAASRNGYETVVGSALMLVGANSRTVAQAVGDKLEEIKKTLPPGVVIVPTLNRSQLVMATIKTVAKNLVEGAALVVVILFALLGNWRAAVIAALVIPLSLLISAIGMNGLNISGNLMSLGALDFGLIIDGAVIIVENSLRRLAERQHHEGRLLTLKERLEEVILSSREMVRPTVYGQLVIFMVFLPCLTFQGVEGKMFSPMVITLMLALASAFVLSLTFVPAMVAVLLRKKVSEKEVRVIAVTKERYRPLLERAVARPMPFLGAALVTLALAAMAFTFVGREFMPTLDEQNLNLSSVRIPSTSIDQSVAIDLPLERAVLSLPEVQTVYSKAGTASLAADPMPPNASDNYIILKPKSEWPEGITTKEQVIERIREKTAPMVSNNYDVTQPIQMRFNELIGGVRSDVAVKIYGENLDDLASTAQKIAAVLRKTPGATDTRVPLTGGFPTFDIVFDRAAIARYGLTVKEVADTVAAAMAGRPSGQIFDGDRRYDIVIRLPGQQRENLDVLGALPVMLPAVEGQPRASVPLRQLVQFRFTQGLNEVSRDNGKRRVYVEANVGGRDLGSFVDDAAKRIAAEVKLPPGMYIEWGGQFQNLQAATQRLAIIVPLCFILIAATLYMAIGSAALTATVLTAVPLALAGGVFALVLRDIPFSISASVGFIAVSGVAVLNGLVLISAIRKRLEDGAAPNEAVIEGAMERVRPVLMTALVASLGFVPMAIATGTGAEVQKPLATVVIGGLITATVLTLFVLPAVCGMVLRRQKKLEKPGGELLEA.

12 helical membrane-spanning segments follow: residues 14–34 (WLVL…LNLL), 367–387 (VAKN…ALLG), 391–411 (AAVI…IGMN), 419–439 (LMSL…IIVE), 476–496 (TVYG…FQGV), 503–523 (PMVI…LTFV), 562–582 (MPFL…FTFV), 904–924 (LAII…MAIG), 929–949 (TATV…ALVL), 960–980 (VGFI…ISAI), 1004–1024 (PVLM…IATG), and 1036–1056 (VVIG…PAVC).

It belongs to the resistance-nodulation-cell division (RND) (TC 2.A.6) family.

It localises to the cell membrane. Functionally, component of the NCC cation-efflux system that confers resistance to nickel, cobalt and cadmium. May form a membrane tunnel, which allows ion transport across the membrane. The sequence is that of Nickel-cobalt-cadmium resistance protein NccA (nccA) from Alcaligenes xylosoxydans xylosoxydans (Achromobacter xylosoxidans).